We begin with the raw amino-acid sequence, 257 residues long: MSILSLVGLGISKKFITDSAIETLSNSDIIIFDRYTSRSCDINVDVLRRLVKGEREFIEADRSLLENNSKAIIDYLDKGYNVSIASIGDALIATTHVSLLIEAKHRGHEVKVIPGISVHCYLISKSLLSSYKFGKSVTVTFPYNDFIDPTPYNVIKDNKERGLHTILYLDLKNEKAMTANEALQILLRLEERHKKSVLSKSDIIIVGARLGCDDERIIALKVEEATSFDFGNTPHIIIIPGNLHYMEADAIKWILRS.

Residues I11, D89, I92, 117–118, L169, L210, and H235 contribute to the S-adenosyl-L-methionine site; that span reads SV.

It belongs to the diphthine synthase family. As to quaternary structure, homodimer.

The catalysed reaction is 2-[(3S)-amino-3-carboxypropyl]-L-histidyl-[translation elongation factor 2] + 3 S-adenosyl-L-methionine = diphthine-[translation elongation factor 2] + 3 S-adenosyl-L-homocysteine + 3 H(+). It participates in protein modification; peptidyl-diphthamide biosynthesis. Functionally, S-adenosyl-L-methionine-dependent methyltransferase that catalyzes the trimethylation of the amino group of the modified target histidine residue in translation elongation factor 2 (EF-2), to form an intermediate called diphthine. The three successive methylation reactions represent the second step of diphthamide biosynthesis. The sequence is that of Diphthine synthase from Saccharolobus solfataricus (strain ATCC 35092 / DSM 1617 / JCM 11322 / P2) (Sulfolobus solfataricus).